A 1021-amino-acid chain; its full sequence is Contactin-1 (1021 aa).

The first 20 residues, 1 to 20 (MKTPLLVSHLLLISLTSCLG), serve as a signal peptide directing secretion. Ig-like C2-type domains are found at residues 41-131 (PIFE…ATLS), 137-223 (PFPP…KSVF), 241-326 (PADI…ARIY), 331-407 (PEWV…AELK), 413-500 (PTFE…GTLV), and 504-603 (PTRI…LVVR). Intrachain disulfides connect C65–C114 and C158–C211. Residues N208 and N258 are each glycosylated (N-linked (GlcNAc...) asparagine). C263 and C310 form a disulfide bridge. N-linked (GlcNAc...) asparagine glycosylation is present at N338. 2 cysteine pairs are disulfide-bonded: C352-C391 and C436-C484. 4 N-linked (GlcNAc...) asparagine glycosylation sites follow: N457, N473, N494, and N521. C526 and C585 form a disulfide bridge. The N-linked (GlcNAc...) asparagine glycan is linked to N593. Fibronectin type-III domains follow at residues 608–706 (PPGG…TDGA), 711–808 (APSD…SAQD), 813–908 (APTE…APPS), and 909–1002 (QPPR…TLSS). Residues 695 to 719 (SIPSNRIKTDGAAPNVAPSDVGGGG) are disordered. An N-linked (GlcNAc...) asparagine glycan is attached at N935. S1001 carries the GPI-anchor amidated serine lipid modification. A propeptide spans 1002–1021 (SGLLSLLLPSLGFLVFYSEF) (removed in mature form).

It belongs to the immunoglobulin superfamily. Contactin family. As to quaternary structure, monomer. Interacts with NOTCH1. Interacts with CNTNAP1 in cis form and TNR. Binds to the carbonic-anhydrase like domain of PTPRZ1. Detected in a complex with NRCAM and PTPRB. Interacts with TASOR. In terms of tissue distribution, expressed by neurons, oligodendrocytes and their progenitors (at protein level). Myelination regulates the expression being down-regulated when neurons are in contact with Schwann cells.

The protein localises to the cell membrane. Functionally, contactins mediate cell surface interactions during nervous system development. Involved in the formation of paranodal axo-glial junctions in myelinated peripheral nerves and in the signaling between axons and myelinating glial cells via its association with CNTNAP1. Participates in oligodendrocytes generation by acting as a ligand of NOTCH1. Its association with NOTCH1 promotes NOTCH1 activation through the released notch intracellular domain (NICD) and subsequent translocation to the nucleus. Interaction with TNR induces a repulsion of neurons and an inhibition of neurite outgrowth. The chain is Contactin-1 (Cntn1) from Rattus norvegicus (Rat).